The following is a 217-amino-acid chain: Oxygen regulatory protein NreC (217 aa).

A Response regulatory domain is found at 2–119; the sequence is KIVIADDHAV…QLLLAVRTVY (118 aa). Position 53 is a 4-aspartylphosphate (Asp-53). One can recognise an HTH luxR-type domain in the interval 148-213; it reads TNDPFKILSK…ELVEYALKKK (66 aa). A DNA-binding region (H-T-H motif) is located at residues 172–191; the sequence is NKDIAEKLFVSVKTVEAHKT.

Post-translationally, phosphorylated by NreB.

It localises to the cytoplasm. In terms of biological role, member of the two-component regulatory system NreB/NreC involved in the control of dissimilatory nitrate/nitrite reduction in response to oxygen. Phosphorylated NreC binds to a GC-rich palindromic sequence at the promoters of the nitrate (narGHJI) and nitrite (nir) reductase operons, as well as the putative nitrate transporter gene narT, and activates their expression. This is Oxygen regulatory protein NreC (nreC) from Staphylococcus haemolyticus (strain JCSC1435).